Reading from the N-terminus, the 519-residue chain is 4-nitrophenol 2-monooxygenase, oxygenase component (519 aa).

Belongs to the FADH(2)-utilizing monooxygenase family. In terms of assembly, homotetramer. 4-nitrophenol 2-monooxygenase complex consists of an oxygenase component NphA1 and a flavin reductase component NphA2. Requires FAD as cofactor.

It carries out the reaction 4-nitrophenol + NADH + O2 + H(+) = 4-nitrocatechol + NAD(+) + H2O. With respect to regulation, partially inhibited by concentrations of FAD above 10 uM and completely inhibited by concentrations above 50 uM. Utilizes the flavins supplied by NphA2 to catalyze the degradation of 4-nitrophenol (4-NP) via 4-nitrocatechol (4-NC) which is used as the sole carbon, nitrogen, and energy source. Can also degrade phenol and 4-chlorophenol as rapidly as 4-NP. The polypeptide is 4-nitrophenol 2-monooxygenase, oxygenase component (nphA1) (Rhodococcus sp).